The sequence spans 258 residues: Cytosolic Fe-S cluster assembly factor Nubp2 homolog (258 aa).

14-21 (GKGGVGKS) provides a ligand contact to ATP. [4Fe-4S] cluster contacts are provided by Cys-188 and Cys-191.

This sequence belongs to the Mrp/NBP35 ATP-binding proteins family. NUBP2/CFD1 subfamily. In terms of assembly, heterotetramer of 2 Nubp1 and 2 Nubp2 chains. [4Fe-4S] cluster serves as cofactor.

It is found in the cytoplasm. Functionally, component of the cytosolic iron-sulfur (Fe/S) protein assembly (CIA) machinery. Required for maturation of extramitochondrial Fe-S proteins. The Nubp1-Nubp2 heterotetramer forms a Fe-S scaffold complex, mediating the de novo assembly of an Fe-S cluster and its transfer to target apoproteins. In Drosophila pseudoobscura pseudoobscura (Fruit fly), this protein is Cytosolic Fe-S cluster assembly factor Nubp2 homolog.